We begin with the raw amino-acid sequence, 299 residues long: Sulfate adenylyltransferase subunit 2 (299 aa).

It belongs to the PAPS reductase family. CysD subfamily. In terms of assembly, heterodimer composed of CysD, the smaller subunit, and CysN.

The enzyme catalyses sulfate + ATP + H(+) = adenosine 5'-phosphosulfate + diphosphate. The protein operates within sulfur metabolism; hydrogen sulfide biosynthesis; sulfite from sulfate: step 1/3. Its function is as follows. With CysN forms the ATP sulfurylase (ATPS) that catalyzes the adenylation of sulfate producing adenosine 5'-phosphosulfate (APS) and diphosphate, the first enzymatic step in sulfur assimilation pathway. APS synthesis involves the formation of a high-energy phosphoric-sulfuric acid anhydride bond driven by GTP hydrolysis by CysN coupled to ATP hydrolysis by CysD. In Colwellia psychrerythraea (strain 34H / ATCC BAA-681) (Vibrio psychroerythus), this protein is Sulfate adenylyltransferase subunit 2.